The sequence spans 158 residues: S-ribosylhomocysteine lyase (158 aa).

Positions 56, 60, and 125 each coordinate Fe cation.

Belongs to the LuxS family. As to quaternary structure, homodimer. Fe cation serves as cofactor.

It catalyses the reaction S-(5-deoxy-D-ribos-5-yl)-L-homocysteine = (S)-4,5-dihydroxypentane-2,3-dione + L-homocysteine. Involved in the synthesis of autoinducer 2 (AI-2) which is secreted by bacteria and is used to communicate both the cell density and the metabolic potential of the environment. The regulation of gene expression in response to changes in cell density is called quorum sensing. Catalyzes the transformation of S-ribosylhomocysteine (RHC) to homocysteine (HC) and 4,5-dihydroxy-2,3-pentadione (DPD). This chain is S-ribosylhomocysteine lyase, found in Leuconostoc citreum (strain KM20).